We begin with the raw amino-acid sequence, 150 residues long: Multiprotein-bridging factor 1 (150 aa).

Residues 36-71 (SSESKGAGQSKGPADHQRIAKLDRDDAPKPPEKVSA) are disordered. Positions 48–70 (PADHQRIAKLDRDDAPKPPEKVS) are enriched in basic and acidic residues. The HTH cro/C1-type domain occupies 84–137 (IKNAEGKSMTQKELATSVNAKPQDIADLESGRAVPDQALLGKLERKLNVKLRGA). Residues 94–113 (QKELATSVNAKPQDIADLES) constitute a DNA-binding region (H-T-H motif).

It belongs to the MBF1 family.

Its function is as follows. Transcriptional coactivator that stimulates GCN4-dependent transcriptional activity by bridging the DNA-binding region of GCN4 and TBP (SPT15), thereby recruiting TBP to GCN4-bound promoters. Involved in induction of the ribosome quality control (RQC) pathway; a pathway that degrades nascent peptide chains during problematic translation. Required to prevent stalled ribosomes from frameshifting. The sequence is that of Multiprotein-bridging factor 1 (MBF1) from Cryptococcus neoformans var. neoformans serotype D (strain B-3501A) (Filobasidiella neoformans).